We begin with the raw amino-acid sequence, 179 residues long: Putative mediator of RNA polymerase II transcription subunit 28 (179 aa).

The stretch at 81 to 119 (SAEKNKIQLKQEIYKVKKEIENKDRLIERYKNKVKEWKY) forms a coiled coil.

Belongs to the Mediator complex subunit 28 family. In terms of assembly, component of the Mediator complex.

It localises to the nucleus. In terms of biological role, component of the Mediator complex, a coactivator involved in the regulated transcription of nearly all RNA polymerase II-dependent genes. Mediator functions as a bridge to convey information from gene-specific regulatory proteins to the basal RNA polymerase II transcription machinery. Mediator is recruited to promoters by direct interactions with regulatory proteins and serves as a scaffold for the assembly of a functional preinitiation complex with RNA polymerase II and the general transcription factors. The sequence is that of Putative mediator of RNA polymerase II transcription subunit 28 (med28) from Dictyostelium discoideum (Social amoeba).